The sequence spans 376 residues: Peroxisomal membrane protein PEX14 (376 aa).

Residues 1–12 (MASSEQAEQPNQ) are compositionally biased toward polar residues. Residues 1-24 (MASSEQAEQPNQPSSPPGSENVVP) are disordered. A2 is subject to N-acetylalanine. Over 2–108 (ASSEQAEQPN…YSPRGSRWRD (107 aa)) the chain is Peroxisomal. K34 bears the N6-acetyllysine mark. A disordered region spans residues 70–102 (SGTAADEPSPLGPATPVVPVQPPHLTPQPYSPR). Residues 88 to 99 (PVQPPHLTPQPY) show a composition bias toward pro residues. The helical transmembrane segment at 109 to 127 (YGALAIIMAGIAFGFHQLY) threads the bilayer. Residues 128–376 (KRYLLPLILG…EGASNETERD (249 aa)) are Cytoplasmic-facing. The tract at residues 230–376 (PPSPSAPKIP…EGASNETERD (147 aa)) is disordered. S232 carries the post-translational modification Phosphoserine. 2 stretches are compositionally biased toward low complexity: residues 247–259 (SSSP…VNHH) and 265–275 (SPVSNESTSSS). Residues S282 and S334 each carry the phosphoserine modification. The span at 323 to 341 (KEDEDDEDDDVSHVDEEDV) shows a compositional bias: acidic residues. Residues 359 to 376 (QVEKLRRPEGASNETERD) are compositionally biased toward basic and acidic residues.

It belongs to the peroxin-14 family. As to quaternary structure, interacts with PEX13; forming the PEX13-PEX14 docking complex. Interacts with PEX5 (via WxxxF/Y motifs). Interacts with PEX19. Interacts with tubulin.

It localises to the peroxisome membrane. Component of the PEX13-PEX14 docking complex, a translocon channel that specifically mediates the import of peroxisomal cargo proteins bound to PEX5 receptor. The PEX13-PEX14 docking complex forms a large import pore which can be opened to a diameter of about 9 nm. Mechanistically, PEX5 receptor along with cargo proteins associates with the PEX14 subunit of the PEX13-PEX14 docking complex in the cytosol, leading to the insertion of the receptor into the organelle membrane with the concomitant translocation of the cargo into the peroxisome matrix. Plays a key role for peroxisome movement through a direct interaction with tubulin. This chain is Peroxisomal membrane protein PEX14, found in Mus musculus (Mouse).